Reading from the N-terminus, the 931-residue chain is Aconitate hydratase A (931 aa).

Positions 402 to 454 (SASPVDEASAESFPASDAPAYGSQENGAGAPQHADGTGAAVPSNPVTVTAPDG) are disordered. 3 residues coordinate [4Fe-4S] cluster: cysteine 472, cysteine 538, and cysteine 541.

The protein belongs to the aconitase/IPM isomerase family. [4Fe-4S] cluster is required as a cofactor.

The enzyme catalyses citrate = D-threo-isocitrate. The catalysed reaction is citrate = cis-aconitate + H2O. It catalyses the reaction cis-aconitate + H2O = D-threo-isocitrate. The protein operates within carbohydrate metabolism; tricarboxylic acid cycle; isocitrate from oxaloacetate: step 2/2. Catalyzes the reversible isomerization of citrate to isocitrate via cis-aconitate in the tricarboxylic acid (TCA) cycle. Aconitase activity is important for the initiation of morphological and physiological differentiation of S.viridochromogenes. In addition, the apo form of AcnA (lacking the [4Fe-4S] cluster) functions as a RNA-binding regulatory protein, which binds to iron responsive elements (IREs) located on the untranslated region of certain mRNAs, including recA and ftsZ. Binding to IRE-like structures probably alters the target mRNA stability and regulates the protein amount. The apo form plays a regulatory role in oxidative stress response. The protein is Aconitate hydratase A of Streptomyces viridochromogenes (strain DSM 40736 / JCM 4977 / BCRC 1201 / Tue 494).